Here is a 293-residue protein sequence, read N- to C-terminus: Probable metal transport system membrane protein TC_0698 (293 aa).

A run of 7 helical transmembrane segments spans residues Ser-18–Val-38, Ile-41–Trp-61, Leu-68–Gly-88, Ile-101–Pro-121, Asp-142–Thr-162, Phe-186–Ile-206, and Phe-242–Leu-262.

This sequence belongs to the ABC-3 integral membrane protein family.

It is found in the cell inner membrane. In terms of biological role, part of an ATP-driven transport system TC_0696/TC_0697/TC_0698 for a metal. The chain is Probable metal transport system membrane protein TC_0698 from Chlamydia muridarum (strain MoPn / Nigg).